The sequence spans 599 residues: Kinesin light chain 2 (599 aa).

Residues 78–143 (ILALSSHLGA…KQHLLFMSQI (66 aa)) adopt a coiled-coil conformation. Basic and acidic residues predominate over residues 154–163 (EKGDVPKDSL). The segment at 154–188 (EKGDVPKDSLDDLFPNEDEQSPAPSPGGGDVAAQH) is disordered. 2 positions are modified to phosphoserine: Ser174 and Ser178. TPR repeat units lie at residues 197–230 (LRTL…LEKT), 239–272 (ATML…REKT), 281–314 (AATL…REKV), 323–356 (AKQL…YATR), and 365–398 (AKTK…AHEK). Ser443 carries the post-translational modification Phosphoserine. The stretch at 447-480 (NTTLRTLGALYRPEGKLEAAHTLEDCASRSRKQG) is one TPR 6 repeat. A disordered region spans residues 492–541 (LLKDGSGRGHRRGSRDVAGPQSESDLEESGPAAEWSGDGSGSLRRSGSFG). Phosphoserine is present on residues Ser505 and Ser515. A compositionally biased stretch (low complexity) spans 532-541 (GSLRRSGSFG). Ser574, Ser575, and Ser582 each carry phosphoserine.

Belongs to the kinesin light chain family. Oligomeric complex composed of two heavy chains and two light chains. Interacts (via TPR repeats) with PLEKHM2.

It localises to the cytoplasm. The protein resides in the cytoskeleton. It is found in the lysosome membrane. Kinesin is a microtubule-associated force-producing protein that plays a role in organelle transport. The light chain functions in coupling of cargo to the heavy chain or in the modulation of its ATPase activity. Through binding with PLEKHM2 and ARL8B, recruits kinesin-1 to lysosomes and hence direct lysosomes movement toward microtubule plus ends. In Mus musculus (Mouse), this protein is Kinesin light chain 2.